An 89-amino-acid chain; its full sequence is Large ribosomal subunit protein bL27 (89 aa).

Residues 1-21 (MAHKKAGGSSRNGRDSESKRL) form a disordered region.

Belongs to the bacterial ribosomal protein bL27 family.

In Chelativorans sp. (strain BNC1), this protein is Large ribosomal subunit protein bL27.